We begin with the raw amino-acid sequence, 286 residues long: Translocon-associated protein subunit alpha (286 aa).

The N-terminal stretch at 1–23 is a signal peptide; the sequence is MRVLPRLLLLLLLAFPAAVLLRG. The Lumenal portion of the chain corresponds to 24 to 207; it reads GPGGSLVAAQ…EREDGLDGET (184 aa). Acidic residues predominate over residues 37–75; that stretch reads EDEETVEDSIIEDEDDEAEVEEDEPTDLAEDKEEEDVSG. Positions 37–83 are disordered; that stretch reads EDEETVEDSIIEDEDDEAEVEEDEPTDLAEDKEEEDVSGEPEASPSA. Asn-136 and Asn-191 each carry an N-linked (GlcNAc...) asparagine glycan. The chain crosses the membrane as a helical span at residues 208-228; the sequence is IFMYMFLAGLGLLVVVGLHQL. The Cytoplasmic segment spans residues 229 to 286; it reads LESRKRKRPIQKVEMGTSSQNDVDMSWIPQETLNQINKASPRRLPRKRAQKRSVGSDE. Ser-247 is subject to Phosphoserine. Thr-260 carries the phosphothreonine modification. Residues 261-286 form a disordered region; that stretch reads LNQINKASPRRLPRKRAQKRSVGSDE. Ser-268 is subject to Phosphoserine. The segment covering 268–279 has biased composition (basic residues); that stretch reads SPRRLPRKRAQK.

This sequence belongs to the TRAP-alpha family. In terms of assembly, heterotetramer of TRAP-alpha, TRAP-beta, TRAP-delta and TRAP-gamma. Interacts with palmitoylated calnexin (CALX), the interaction is required for efficient folding of glycosylated proteins. In terms of processing, phosphorylated in its cytoplasmic tail.

The protein resides in the endoplasmic reticulum membrane. Functionally, TRAP proteins are part of a complex whose function is to bind calcium to the ER membrane and thereby regulate the retention of ER resident proteins. May be involved in the recycling of the translocation apparatus after completion of the translocation process or may function as a membrane-bound chaperone facilitating folding of translocated proteins. The polypeptide is Translocon-associated protein subunit alpha (SSR1) (Canis lupus familiaris (Dog)).